A 233-amino-acid polypeptide reads, in one-letter code: Antilisterial bacteriocin subtilosin biosynthesis protein AlbG (233 aa).

A run of 6 helical transmembrane segments spans residues 7-27 (FTLLLLLIGMAAYSFGWVQAV), 46-66 (GLLACTAALLMLPAFLYLHYV), 116-136 (TYVMAAVLCQVIIFGCMFEIV), 145-165 (TPPAFSMGLAMLLILYLLFCM), 176-198 (GSLFRKVFAGALAAAGIWWMLSF), and 203-220 (LLFLIILAAIQQIGSFIY).

It is found in the cell membrane. Functionally, involved in the production of the bacteriocin subtilosin. The sequence is that of Antilisterial bacteriocin subtilosin biosynthesis protein AlbG (albG) from Bacillus subtilis (strain 168).